The chain runs to 215 residues: 16S rRNA (adenine(1408)-N(1))-methyltransferase (215 aa).

S-adenosyl-L-methionine is bound by residues G32, D55, 87-88, 102-107, and 191-193; these read AE, LMPWGS, and TSW.

It belongs to the methyltransferase superfamily. Kanamycin-apramycin resistance family.

It carries out the reaction adenosine(1408) in 16S rRNA + S-adenosyl-L-methionine = N(1)-methyladenosine(1408) in 16S rRNA + S-adenosyl-L-homocysteine + H(+). In terms of biological role, specifically methylates the N(1) position of adenine 1408 in 16S rRNA. Confers resistance to various aminoglycosides, including kanamycin, neomycin and apramycin. This chain is 16S rRNA (adenine(1408)-N(1))-methyltransferase (kamB), found in Streptoalloteichus tenebrarius (strain ATCC 17920 / DSM 40477 / JCM 4838 / CBS 697.72 / NBRC 16177 / NCIMB 11028 / NRRL B-12390 / A12253. 1 / ISP 5477) (Streptomyces tenebrarius).